The primary structure comprises 548 residues: Chaperonin GroEL 1 (548 aa).

Residues 30 to 33, K51, 87 to 91, G415, 479 to 481, and D495 contribute to the ATP site; these read TLGP, DGTTT, and NAA.

This sequence belongs to the chaperonin (HSP60) family. Forms a cylinder of 14 subunits composed of two heptameric rings stacked back-to-back. Interacts with the co-chaperonin GroES.

It localises to the cytoplasm. It carries out the reaction ATP + H2O + a folded polypeptide = ADP + phosphate + an unfolded polypeptide.. Its function is as follows. Together with its co-chaperonin GroES, plays an essential role in assisting protein folding. The GroEL-GroES system forms a nano-cage that allows encapsulation of the non-native substrate proteins and provides a physical environment optimized to promote and accelerate protein folding. The chain is Chaperonin GroEL 1 from Vibrio harveyi (Beneckea harveyi).